Here is a 181-residue protein sequence, read N- to C-terminus: Probable pyruvoyl-dependent arginine decarboxylase (181 aa).

The residue at position 43 (Ser43) is a Pyruvic acid (Ser).

Belongs to the PdaD family. Requires pyruvate as cofactor.

It catalyses the reaction L-arginine + H(+) = agmatine + CO2. The polypeptide is Probable pyruvoyl-dependent arginine decarboxylase (Prosthecochloris aestuarii (strain DSM 271 / SK 413)).